Consider the following 260-residue polypeptide: Glutamate racemase (260 aa).

Substrate is bound by residues 7-8 (DS) and 39-40 (YG). The active-site Proton donor/acceptor is Cys71. A substrate-binding site is contributed by 72–73 (NT). The active-site Proton donor/acceptor is the Cys182. 183 to 184 (TH) is a substrate binding site.

Belongs to the aspartate/glutamate racemases family.

The enzyme catalyses L-glutamate = D-glutamate. It participates in cell wall biogenesis; peptidoglycan biosynthesis. In terms of biological role, provides the (R)-glutamate required for cell wall biosynthesis. This is Glutamate racemase from Sulfurihydrogenibium sp. (strain YO3AOP1).